Consider the following 470-residue polypeptide: Histone deacetylase HOS1 (470 aa).

The interval Leu-47–Lys-392 is histone deacetylase. At Ser-110 the chain carries Phosphoserine. Residue His-211 is part of the active site.

The protein belongs to the histone deacetylase family. HD type 1 subfamily.

It localises to the nucleus. It catalyses the reaction N(6)-acetyl-L-lysyl-[histone] + H2O = L-lysyl-[histone] + acetate. In terms of biological role, responsible for the deacetylation of lysine residues on the N-terminal part of the core histones (H2A, H2B, H3 and H4). Histone deacetylation plays an important role in transcriptional regulation, cell cycle progression and developmental events. Histone deacetylases act via the formation of large multiprotein complexes. The polypeptide is Histone deacetylase HOS1 (HOS1) (Saccharomyces cerevisiae (strain ATCC 204508 / S288c) (Baker's yeast)).